The sequence spans 515 residues: Zinc-binding protein AdcA (515 aa).

Positions 1–28 (MKKKILLMMSLISVFFAWQLTQAKQVLA) are cleaved as a signal peptide. Histidine 66 provides a ligand contact to Zn(2+). Residues 125–148 (DHHHEDADKKHEHNKHSEEGHNHA) are disordered. The tract at residues 129-148 (EDADKKHEHNKHSEEGHNHA) is his-rich loop. Zn(2+) contacts are provided by histidine 152, histidine 216, and glutamate 291.

The protein belongs to the bacterial solute-binding protein 9 family.

Functionally, part of the ATP-binding cassette (ABC) transport system AdcABC involved in zinc import. Binds zinc with high affinity and specificity and delivers it to the membrane permease for translocation into the cytoplasm. The chain is Zinc-binding protein AdcA (adcA) from Streptococcus pyogenes serotype M1.